The primary structure comprises 162 residues: Protein archease (162 aa).

3 residues coordinate Ca(2+): Asp34, Asp161, and Ile162.

It belongs to the archease family. Component of the tRNA-splicing ligase complex.

In terms of biological role, component of the tRNA-splicing ligase complex required to facilitate the enzymatic turnover of catalytic subunit RTCB. Together with ddx1, acts by facilitating the guanylylation of RTCB, a key intermediate step in tRNA ligation. This Ictalurus punctatus (Channel catfish) protein is Protein archease.